Consider the following 240-residue polypeptide: Probable alpha-aspartyl dipeptidase (240 aa).

Residues serine 125, aspartate 140, and histidine 162 each act as charge relay system in the active site.

The protein belongs to the peptidase S51 family.

It localises to the cytoplasm. It carries out the reaction Dipeptidase E catalyzes the hydrolysis of dipeptides Asp-|-Xaa. It does not act on peptides with N-terminal Glu, Asn or Gln, nor does it cleave isoaspartyl peptides.. Hydrolyzes dipeptides containing N-terminal aspartate residues. This Drosophila melanogaster (Fruit fly) protein is Probable alpha-aspartyl dipeptidase.